We begin with the raw amino-acid sequence, 308 residues long: Glutathione synthetase (308 aa).

The ATP-grasp domain maps to 117–300; that stretch reads KLLPLSFPKF…LERDCWDYFE (184 aa). Position 143-198 (143-198) interacts with ATP; sequence YAEYGDIVLKPLYDYGGNGVCRICGRADVGAISSAMVERYEAPLVAQQFIDDISSD. Positions 271 and 273 each coordinate Mg(2+).

Belongs to the prokaryotic GSH synthase family. It depends on Mg(2+) as a cofactor. Mn(2+) serves as cofactor.

It carries out the reaction gamma-L-glutamyl-L-cysteine + glycine + ATP = glutathione + ADP + phosphate + H(+). Its pathway is sulfur metabolism; glutathione biosynthesis; glutathione from L-cysteine and L-glutamate: step 2/2. This Anaplasma centrale protein is Glutathione synthetase.